The primary structure comprises 255 residues: CDP-diacylglycerol pyrophosphatase (255 aa).

Residues 5–27 (LLITVALIAVLALTTLVAWRYLF) traverse the membrane as a helical segment.

It belongs to the Cdh family.

It localises to the cell inner membrane. The catalysed reaction is a CDP-1,2-diacyl-sn-glycerol + H2O = a 1,2-diacyl-sn-glycero-3-phosphate + CMP + 2 H(+). It participates in phospholipid metabolism; CDP-diacylglycerol degradation; phosphatidate from CDP-diacylglycerol: step 1/1. In Cronobacter sakazakii (strain ATCC BAA-894) (Enterobacter sakazakii), this protein is CDP-diacylglycerol pyrophosphatase.